The primary structure comprises 197 residues: MALQQIVEQTVAGLGYDLVEIERSAGGLLRITIDLVWVPPTDEVSAAVGAEQFITVEDCEKVTRQLQFALEVEGVDYTRLEVSSPGIDRLLRNEADFKRFEGEVIDITLKQPMGAAAGGQVHANRKKFRGALERADSGGWQIVWSDEPPVKPGQRISKKRVPAPLQALGFTLDELREARLAPIVDFKGRGTKPGEPG.

It belongs to the RimP family.

The protein resides in the cytoplasm. Required for maturation of 30S ribosomal subunits. This chain is Ribosome maturation factor RimP, found in Acidovorax sp. (strain JS42).